Reading from the N-terminus, the 155-residue chain is Small ribosomal subunit protein uS7c (155 aa).

This sequence belongs to the universal ribosomal protein uS7 family. As to quaternary structure, part of the 30S ribosomal subunit.

The protein resides in the plastid. It localises to the chloroplast. One of the primary rRNA binding proteins, it binds directly to 16S rRNA where it nucleates assembly of the head domain of the 30S subunit. This Marchantia polymorpha (Common liverwort) protein is Small ribosomal subunit protein uS7c (rps7).